Consider the following 928-residue polypeptide: RhoGEF domain-containing protein gxcH (928 aa).

Residues 30-48 (SKSFDNNNNNNSNTNNIKN) show a composition bias toward low complexity. 3 disordered regions span residues 30-76 (SKSF…PPVP), 90-201 (ITNY…PPLG), and 318-410 (DNGV…NKDT). A compositionally biased stretch (polar residues) spans 93 to 103 (YIPTTPPSINI). The span at 112-123 (DNYDDNYDDNYS) shows a compositional bias: acidic residues. Polar residues-rich tracts occupy residues 129-141 (TSTTPPQFNSPEF), 175-187 (ETFNDQNNNEGLQ), and 334-367 (KSGTTLDSEPNLKSVSSSNRGSFVISKSSYNLRG). The segment covering 377–407 (NQTTNKNNSNNNNNNTTTNNNNNNNNNNNNN) has biased composition (low complexity). Positions 484 to 671 (IFNKVVKEII…GKIVSDINGK (188 aa)) constitute a DH domain. Residues 699 to 807 (FIGEGKVKKV…NKIEDQIVSE (109 aa)) are PH-like. The interval 835–928 (SDSQSDFVDH…NTEPENFSFY (94 aa)) is disordered. Low complexity predominate over residues 848–857 (QEQQEQQQQQ).

In terms of biological role, GTPase-activating protein. The polypeptide is RhoGEF domain-containing protein gxcH (gxcH) (Dictyostelium discoideum (Social amoeba)).